The following is a 920-amino-acid chain: Dynamin-B (920 aa).

The disordered stretch occupies residues 65–84 (NSNNNNNNNNNNKINKNNNN). A Dynamin-type G domain is found at 154-448 (EITLPQIIVV…LTKHIRDTFP (295 aa)). A G1 motif region spans residues 164–171 (GSQSSGKS). GTP is bound at residue 164–172 (GSQSSGKSS). A G2 motif region spans residues 190-192 (VTR). The tract at residues 204–241 (TTSRNNVNENEDEDEDDNYYDNDNDDNSLEEWGEFGHT) is disordered. A compositionally biased stretch (acidic residues) spans 212–236 (ENEDEDEDDNYYDNDNDDNSLEEWG). The G3 motif stretch occupies residues 290 to 293 (DLPG). Positions 359–362 (TKLD) are G4 motif. GTP is bound by residues 359 to 365 (TKLDLMD) and 390 to 393 (NRSQ). A G5 motif region spans residues 389–392 (VNRS). The tract at residues 680 to 790 (FQSTSSTSSS…EIQIQQQQQQ (111 aa)) is disordered. 2 stretches are compositionally biased toward low complexity: residues 681–705 (QSTS…NSNP) and 724–751 (QIKQ…QKQQ). Residues 724–751 (QIKQQQQQQQQQQQQSYQQQQQQQQKQQ) are a coiled coil. A compositionally biased stretch (pro residues) spans 765 to 774 (PPSPPSPPQP). Positions 775–790 (KQQQSHEIQIQQQQQQ) are enriched in low complexity. The GED domain maps to 825–916 (IYLLRRLLLA…SLSQSENSDL (92 aa)).

Belongs to the TRAFAC class dynamin-like GTPase superfamily. Dynamin/Fzo/YdjA family.

Its subcellular location is the cytoplasm. Functionally, enzyme hydrolyzing GTP. This chain is Dynamin-B (dymB), found in Dictyostelium discoideum (Social amoeba).